We begin with the raw amino-acid sequence, 92 residues long: Small ribosomal subunit protein uS19c (92 aa).

It belongs to the universal ribosomal protein uS19 family.

The protein resides in the plastid. Its subcellular location is the chloroplast. In terms of biological role, protein S19 forms a complex with S13 that binds strongly to the 16S ribosomal RNA. In Lactuca sativa (Garden lettuce), this protein is Small ribosomal subunit protein uS19c.